The following is a 492-amino-acid chain: Aspartyl/glutamyl-tRNA(Asn/Gln) amidotransferase subunit B (492 aa).

This sequence belongs to the GatB/GatE family. GatB subfamily. As to quaternary structure, heterotrimer of A, B and C subunits.

It catalyses the reaction L-glutamyl-tRNA(Gln) + L-glutamine + ATP + H2O = L-glutaminyl-tRNA(Gln) + L-glutamate + ADP + phosphate + H(+). It carries out the reaction L-aspartyl-tRNA(Asn) + L-glutamine + ATP + H2O = L-asparaginyl-tRNA(Asn) + L-glutamate + ADP + phosphate + 2 H(+). In terms of biological role, allows the formation of correctly charged Asn-tRNA(Asn) or Gln-tRNA(Gln) through the transamidation of misacylated Asp-tRNA(Asn) or Glu-tRNA(Gln) in organisms which lack either or both of asparaginyl-tRNA or glutaminyl-tRNA synthetases. The reaction takes place in the presence of glutamine and ATP through an activated phospho-Asp-tRNA(Asn) or phospho-Glu-tRNA(Gln). This is Aspartyl/glutamyl-tRNA(Asn/Gln) amidotransferase subunit B from Bradyrhizobium diazoefficiens (strain JCM 10833 / BCRC 13528 / IAM 13628 / NBRC 14792 / USDA 110).